Consider the following 880-residue polypeptide: DNA-directed RNA polymerase subunit Rpo1N (880 aa).

Zn(2+)-binding residues include Cys-58, Cys-61, Cys-68, and His-71. DsDNA contacts are provided by residues Lys-88 and 92–95 (EFLK). Cys-98 and Cys-101 together coordinate Zn(2+). Lys-138 is a dsDNA binding site. Cys-146 and Cys-149 together coordinate Zn(2+). Residues Lys-303, 305-310 (KEGRFR), Arg-323, and Gln-422 each bind dsDNA. Mg(2+) is bound by residues Asp-456, Asp-458, and Asp-460. Zn(2+)-binding residues include Arg-573, Cys-575, Cys-580, and His-582. Residues 812-822 (RTSQSGYMQRR) and Gln-815 each bind dsDNA.

This sequence belongs to the RNA polymerase beta' chain family. Part of the 13-subunit RNA polymerase complex. Rpo1N and Rpo5 form a cleft which docks Rpo13. Interacts with Rpo8 on the periphery of the clamp head. The cofactor is Mg(2+). Zn(2+) serves as cofactor.

It localises to the cytoplasm. The enzyme catalyses RNA(n) + a ribonucleoside 5'-triphosphate = RNA(n+1) + diphosphate. Its function is as follows. DNA-dependent RNA polymerase (RNAP) catalyzes the transcription of DNA into RNA using the four ribonucleoside triphosphates as substrates. Forms the clamp head domain. This Saccharolobus shibatae (strain ATCC 51178 / DSM 5389 / JCM 8931 / NBRC 15437 / B12) (Sulfolobus shibatae) protein is DNA-directed RNA polymerase subunit Rpo1N.